Here is a 432-residue protein sequence, read N- to C-terminus: Teosinte glume architecture 1 (432 aa).

2 disordered regions span residues 20 to 55 and 68 to 102; these read HAAA…GAPA and ECEP…QQQC. Positions 22-41 are enriched in low complexity; the sequence is AAAPSSGGHAANAAAAGTGT. An SBP-type zinc finger spans residues 102 to 179; it reads CPSCAVDGCR…DGHNRRRRKP (78 aa). Residues C105, C110, C127, H130, C146, C149, H153, and C165 each coordinate Zn(2+). Residues 409–420 are compositionally biased toward gly residues; that stretch reads GGGSGGGEGSSD. A disordered region spans residues 409-432; sequence GGGSGGGEGSSDGGTSSSMPFSWQ.

As to quaternary structure, monomer and homodimer. In terms of tissue distribution, strongly expressed in immature ears and weakly in husks. Found in the inflorescence meristem of the developing ear, in the spikelet pair primordia, the glume primordia, the cupule forming region and other floral organs. Not detected in other tissues.

Its function is as follows. SBP transcriptional regulator probably involved in the domestication of maize. Acts as a transcriptional repressor binding to a 5'-GTAC-3' motif. May repress the growth of lateral branches in length and numbers. The polypeptide is Teosinte glume architecture 1 (Zea mays (Maize)).